The sequence spans 206 residues: Thiamine-phosphate synthase (206 aa).

Residues 33–37 and Asn-65 contribute to the 4-amino-2-methyl-5-(diphosphooxymethyl)pyrimidine site; that span reads QMRFK. Residues Asp-66 and Asp-85 each contribute to the Mg(2+) site. Thr-104 lines the 4-amino-2-methyl-5-(diphosphooxymethyl)pyrimidine pocket. 130-132 serves as a coordination point for 2-[(2R,5Z)-2-carboxy-4-methylthiazol-5(2H)-ylidene]ethyl phosphate; the sequence is TAT. Residue Lys-133 coordinates 4-amino-2-methyl-5-(diphosphooxymethyl)pyrimidine. Gly-166 is a binding site for 2-[(2R,5Z)-2-carboxy-4-methylthiazol-5(2H)-ylidene]ethyl phosphate.

Belongs to the thiamine-phosphate synthase family. Mg(2+) is required as a cofactor.

The enzyme catalyses 2-[(2R,5Z)-2-carboxy-4-methylthiazol-5(2H)-ylidene]ethyl phosphate + 4-amino-2-methyl-5-(diphosphooxymethyl)pyrimidine + 2 H(+) = thiamine phosphate + CO2 + diphosphate. It carries out the reaction 2-(2-carboxy-4-methylthiazol-5-yl)ethyl phosphate + 4-amino-2-methyl-5-(diphosphooxymethyl)pyrimidine + 2 H(+) = thiamine phosphate + CO2 + diphosphate. It catalyses the reaction 4-methyl-5-(2-phosphooxyethyl)-thiazole + 4-amino-2-methyl-5-(diphosphooxymethyl)pyrimidine + H(+) = thiamine phosphate + diphosphate. Its pathway is cofactor biosynthesis; thiamine diphosphate biosynthesis; thiamine phosphate from 4-amino-2-methyl-5-diphosphomethylpyrimidine and 4-methyl-5-(2-phosphoethyl)-thiazole: step 1/1. Functionally, condenses 4-methyl-5-(beta-hydroxyethyl)thiazole monophosphate (THZ-P) and 2-methyl-4-amino-5-hydroxymethyl pyrimidine pyrophosphate (HMP-PP) to form thiamine monophosphate (TMP). The sequence is that of Thiamine-phosphate synthase from Flavobacterium psychrophilum (strain ATCC 49511 / DSM 21280 / CIP 103535 / JIP02/86).